The chain runs to 302 residues: MQPLRPSPAAGGWAGVAGVGPTTVDEASMERSKSFVKALQELKNLRPQLYSASEYCEKSYLHSEQKQMVLENLKDYAVRAVVNAVDHLGTVAYKLTDLFEQQASEVSTVELKVARLNQQILTCQIFTDRAGLRQQKIGGTTFKHHKHYILPSTGHKRTQAARLQTDNGQDSKPKPYPSAKTLSWHLSSENSISTTGAQKYTFTLGDTISSKPASNGSMYLLGKDIPASPMHKPLQPNGNTSFDAKKNVGSKDQPGFMHMSTFNALDKPRGREIQKVPVSTKSMLATLFIKHKSAKTRKASVR.

Disordered regions lie at residues 151-179 and 220-256; these read PSTG…YPSA and LLGK…QPGF. Polar residues predominate over residues 161–170; sequence ARLQTDNGQD.

Belongs to the ABI family. In terms of assembly, binds SCAR.

It localises to the cytoplasm. The protein resides in the cytoskeleton. In terms of biological role, involved in regulation of actin and microtubule organization. Part of a WAVE complex that activates the Arp2/3 complex. This is Probable protein ABIL4 from Oryza sativa subsp. japonica (Rice).